Here is a 1323-residue protein sequence, read N- to C-terminus: Alpha-factor-transporting ATPase (1323 aa).

The span at 1–10 (MFQEKSEKSS) shows a compositional bias: basic and acidic residues. A disordered region spans residues 1 to 23 (MFQEKSEKSSFPKRSSSLRSPSD). The span at 12–23 (PKRSSSLRSPSD) shows a compositional bias: low complexity. Asn-37 is a glycosylation site (N-linked (GlcNAc...) asparagine). A helical membrane pass occupies residues 42-62 (WPLILVGILLMGGSAIATLMN). One can recognise an ABC transmembrane type-1 1 domain in the interval 45 to 337 (ILVGILLMGG…ITELLAILNT (293 aa)). Residue Asn-83 is glycosylated (N-linked (GlcNAc...) asparagine). A helical membrane pass occupies residues 93–113 (LCVGLIGIGCCKMILVWLGMF). A glycan (N-linked (GlcNAc...) asparagine) is linked at Asn-136. The next 4 membrane-spanning stretches (helical) occupy residues 169–189 (ILAS…MSFY), 192–212 (WSTT…GWYF), 281–301 (VLKT…NYLL), and 315–335 (FSSC…LAIL). The 237-residue stretch at 373 to 609 (IYFKNVWFES…EIVQNYKSQG (237 aa)) folds into the ABC transporter 1 domain. 408 to 415 (GKSGSGKS) is an ATP binding site. N-linked (GlcNAc...) asparagine glycosylation occurs at Asn-450. The helical transmembrane segment at 677 to 697 (LLGFGILLAIFQGVSSPVFSY) threads the bilayer. In terms of domain architecture, ABC transmembrane type-1 2 spans 678–969 (LGFGILLAIF…LIHQLPEITR (292 aa)). N-linked (GlcNAc...) asparagine glycosylation occurs at Asn-714. A helical transmembrane segment spans residues 724–744 (CISLSIAIFTGVTSYLSEFIL). Residues Asn-777 and Asn-789 are each glycosylated (N-linked (GlcNAc...) asparagine). 3 consecutive transmembrane segments (helical) span residues 801-821 (FFPL…WSIV), 828-848 (LVGI…GKIL), and 909-929 (IGFA…LFYG). A glycan (N-linked (GlcNAc...) asparagine) is linked at Asn-939. Residues 941-961 (SQLLQVITLLSFTISNASILI) traverse the membrane as a helical segment. 3 N-linked (GlcNAc...) asparagine glycosylation sites follow: Asn-991, Asn-1030, and Asn-1039. Positions 1035–1321 (ISFNNVSFSY…DGEFTKITKT (287 aa)) constitute an ABC transporter 2 domain. ATP is bound at residue 1071 to 1078 (GQSGSGKS). Asn-1097 is a glycosylation site (N-linked (GlcNAc...) asparagine). The helical transmembrane segment at 1120–1140 (GLLCQTIAIVPQFPKFFSGTI) threads the bilayer. N-linked (GlcNAc...) asparagine glycosylation is found at Asn-1143, Asn-1149, and Asn-1157. Residues 1170–1190 (ILKLVNLHQFIVSLPQGLLTI) form a helical membrane-spanning segment. Residue Asn-1192 is glycosylated (N-linked (GlcNAc...) asparagine). The segment covering 1194 to 1208 (SDNDNDNGNENENEN) has biased composition (acidic residues). The tract at residues 1194-1217 (SDNDNDNGNENENENENGNTISTS) is disordered.

This sequence belongs to the ABC transporter superfamily. Alpha-factor sex pheromone exporter (TC 3.A.1.206) family.

The protein resides in the membrane. The catalysed reaction is an [alpha-factor](in) + ATP + H2O = an [alpha-factor](out) + ADP + phosphate + H(+). This Candida albicans (strain WO-1) (Yeast) protein is Alpha-factor-transporting ATPase (HST6).